Here is a 688-residue protein sequence, read N- to C-terminus: MTHKQRAIFEPTLVRTALLDAVKKLDPRVQWRNPVMFVVYLGSWLTTLIWLAILSGHTTGSAMFTGSIALWLWFTVLFANMAEALAEGRSKAQAASLRGVKKTSWAKKLSEARVDAPQEKVSADSLRKGDLVLIEAGDTVPCDGEVLEGGASVDESAITGESAPVIRESGGDFSSVTGGTRVLSDWLVVECRVNPGETFLDRMIAMVEGAKRRKTPNEVALTILLVALTIVFLLATATLYPFSVFSVEASQAGSPVTITVLVALLVCLIPTTIGGLLSAIGVAGMSRMLGANVIATSGRAVEAAGDVDVLLLDKTGTITLGNRQASEFLPAPGVTEQQLADAAQLSSLADETPEGRSIVVLAKQRFNLRERDLHSLNATFIPFSAQTRMSGVNVQERMIRKGAVDAIRRHVESNQGHFPPAVDDLVASVARTGGTPLVVAEGSRVLGVVALKDIVKGGIKERFAELRKMGIKTVMITGDNRLTAAAIAAEAGVDDFLAEATPEAKLALIRQYQAEGRLVAMTGDGTNDAPALAQADVAVAMNSGTQAAKEAGNMVDLDSNPTKLIEVVHIGKQMLMTRGSLTTFSIANDVAKYFAIIPAAFAATYPQLNALNIMQLHSPSSAILSAVIFNALVIVFLIPLALKGVSYKAMSAAALLRRNLWIYGLGGLLVPFVGIKLIDLLLTALNMG.

A run of 4 helical transmembrane segments spans residues 34-54 (PVMFVVYLGSWLTTLIWLAIL), 62-82 (AMFTGSIALWLWFTVLFANMA), 219-239 (VALTILLVALTIVFLLATATL), and 260-280 (VLVALLVCLIPTTIGGLLSAI). The active-site 4-aspartylphosphate intermediate is the Asp313. Residues Asp350, Glu354, 383–390 (FSAQTRMS), and Lys401 contribute to the ATP site. Mg(2+) contacts are provided by Asp524 and Asp528. Helical transmembrane passes span 594–614 (FAIIPAAFAATYPQLNALNIM), 622–642 (AILSAVIFNALVIVFLIPLAL), and 662–682 (IYGLGGLLVPFVGIKLIDLLL).

Belongs to the cation transport ATPase (P-type) (TC 3.A.3) family. Type IA subfamily. In terms of assembly, the system is composed of three essential subunits: KdpA, KdpB and KdpC.

It localises to the cell inner membrane. It catalyses the reaction K(+)(out) + ATP + H2O = K(+)(in) + ADP + phosphate + H(+). Part of the high-affinity ATP-driven potassium transport (or Kdp) system, which catalyzes the hydrolysis of ATP coupled with the electrogenic transport of potassium into the cytoplasm. This subunit is responsible for energy coupling to the transport system and for the release of the potassium ions to the cytoplasm. In Yersinia pseudotuberculosis serotype O:1b (strain IP 31758), this protein is Potassium-transporting ATPase ATP-binding subunit.